The primary structure comprises 306 residues: MSVRDLTILGCSSQQPTRFRNHGAYLLRWNGEGFLFDPGEGTQRQFIFANIAPSVINRIFISHFHGDHCLGLGSILMRLNLDKVRHPIHCYYPASGKKYFDRLRYGTIYHEMIHVVEHPVSKAGLVEDDGRFKIEAAFLQHGIENIGWRITEADTRKFDNQKLIDRGIRGSLVKELQEKGQLNLDGQTIYLDDVSWIRKGDQFSVVIDTLPCQNAIDIARNATLLLCESTYLEEHKELARLHSHLTAKQAALIAKEANAKQLILTHFSARYQNLKLFEQEARTIFANTFVANDLITFPFTKVNLKS.

Zn(2+)-binding residues include histidine 63, histidine 65, aspartate 67, histidine 68, histidine 141, aspartate 208, and histidine 266. Catalysis depends on aspartate 67, which acts as the Proton acceptor.

This sequence belongs to the RNase Z family. Homodimer. Zn(2+) is required as a cofactor.

The catalysed reaction is Endonucleolytic cleavage of RNA, removing extra 3' nucleotides from tRNA precursor, generating 3' termini of tRNAs. A 3'-hydroxy group is left at the tRNA terminus and a 5'-phosphoryl group is left at the trailer molecule.. Zinc phosphodiesterase, which displays some tRNA 3'-processing endonuclease activity. Probably involved in tRNA maturation, by removing a 3'-trailer from precursor tRNA. This is Ribonuclease Z from Protochlamydia amoebophila (strain UWE25).